A 238-amino-acid polypeptide reads, in one-letter code: MRPSGRTPEQPRDVRITRNYTRHAEGSVLVEFGDTKVICTASVENKVPPFLRGEGKGWITAEYGMLPRSTGSRMGREAARGKQGGRTVEIQRLIGRSLRAAVDLEALGEHTITIDCDVIQADGGTRTAAITGGCVALVDALNHLVKEKRLKKSPLKQMVAAVSVGVYRGTPVADLDYPEDSEAETDMNVIMTDQGGFIEIQGTAEGAPFEQAELDAMLALARKAIDQLFELQKEALSA.

Phosphate-binding positions include Arg86 and 124–126 (GTR).

It belongs to the RNase PH family. In terms of assembly, homohexameric ring arranged as a trimer of dimers.

The enzyme catalyses tRNA(n+1) + phosphate = tRNA(n) + a ribonucleoside 5'-diphosphate. Its function is as follows. Phosphorolytic 3'-5' exoribonuclease that plays an important role in tRNA 3'-end maturation. Removes nucleotide residues following the 3'-CCA terminus of tRNAs; can also add nucleotides to the ends of RNA molecules by using nucleoside diphosphates as substrates, but this may not be physiologically important. Probably plays a role in initiation of 16S rRNA degradation (leading to ribosome degradation) during starvation. In Marinobacter nauticus (strain ATCC 700491 / DSM 11845 / VT8) (Marinobacter aquaeolei), this protein is Ribonuclease PH.